Reading from the N-terminus, the 63-residue chain is Alpha-toxin CsE5 (63 aa).

In terms of domain architecture, LCN-type CS-alpha/beta spans 2–61; the sequence is KDGYPVDSGNCKYECLKDDYCNDLCLERKADKGYCYWGKVSCYCYGLPDNSPTKTSGKCN. 4 disulfide bridges follow: Cys12/Cys60, Cys16/Cys36, Cys22/Cys43, and Cys26/Cys45.

This sequence belongs to the long (4 C-C) scorpion toxin superfamily. Sodium channel inhibitor family. Alpha subfamily. As to expression, expressed by the venom gland.

Its subcellular location is the secreted. In terms of biological role, alpha toxins bind voltage-independently at site-3 of sodium channels (Nav) and inhibit the inactivation of the activated channels, thereby blocking neuronal transmission. This is Alpha-toxin CsE5 from Centruroides sculpturatus (Arizona bark scorpion).